A 381-amino-acid chain; its full sequence is L-lactate dehydrogenase (381 aa).

One can recognise an FMN hydroxy acid dehydrogenase domain in the interval 1–380 (MIISASTDYR…SADSLVRELG (380 aa)). Position 24 (Tyr-24) interacts with substrate. FMN-binding residues include Ser-106 and Gln-127. Position 129 (Tyr-129) interacts with substrate. Thr-155 contacts FMN. Residue Arg-164 participates in substrate binding. Residue Lys-251 participates in FMN binding. His-275 (proton acceptor) is an active-site residue. Residue Arg-278 coordinates substrate. 306–330 (DSGIRTGLDVVRMIALGADSVLLGR) contacts FMN.

It belongs to the FMN-dependent alpha-hydroxy acid dehydrogenase family. In terms of assembly, homotetramer. It depends on FMN as a cofactor.

It is found in the cell inner membrane. It catalyses the reaction (S)-lactate + A = pyruvate + AH2. Catalyzes the conversion of L-lactate to pyruvate. Is coupled to the respiratory chain. In Pseudomonas aeruginosa (strain UCBPP-PA14), this protein is L-lactate dehydrogenase.